Consider the following 117-residue polypeptide: MDMRVPAQLLGLLLLWLPGAKCDIQMTQSPSTLSASVGDRVTITCRASQSISSWLAWYQQKPGKAPKLLIYKASSLESGVPSRFSGSGSGTEFTLTISSLQPDDFATYYCQQYNSYS.

Positions 1 to 22 are cleaved as a signal peptide; it reads MDMRVPAQLLGLLLLWLPGAKC. A framework-1 region spans residues 23–45; that stretch reads DIQMTQSPSTLSASVGDRVTITC. The region spanning 24 to 117 is the Ig-like domain; it reads IQMTQSPSTL…YYCQQYNSYS (94 aa). A disulfide bond links C45 and C110. Residues 46-56 are complementarity-determining-1; the sequence is RASQSISSWLA. Residues 57-71 form a framework-2 region; that stretch reads WYQQKPGKAPKLLIY. A complementarity-determining-2 region spans residues 72–78; it reads KASSLES. The framework-3 stretch occupies residues 79-110; the sequence is GVPSRFSGSGSGTEFTLTISSLQPDDFATYYC. The complementarity-determining-3 stretch occupies residues 111–117; it reads QQYNSYS.

In terms of assembly, immunoglobulins are composed of two identical heavy chains and two identical light chains; disulfide-linked.

Its subcellular location is the secreted. It localises to the cell membrane. Functionally, v region of the variable domain of immunoglobulin light chains that participates in the antigen recognition. Immunoglobulins, also known as antibodies, are membrane-bound or secreted glycoproteins produced by B lymphocytes. In the recognition phase of humoral immunity, the membrane-bound immunoglobulins serve as receptors which, upon binding of a specific antigen, trigger the clonal expansion and differentiation of B lymphocytes into immunoglobulins-secreting plasma cells. Secreted immunoglobulins mediate the effector phase of humoral immunity, which results in the elimination of bound antigens. The antigen binding site is formed by the variable domain of one heavy chain, together with that of its associated light chain. Thus, each immunoglobulin has two antigen binding sites with remarkable affinity for a particular antigen. The variable domains are assembled by a process called V-(D)-J rearrangement and can then be subjected to somatic hypermutations which, after exposure to antigen and selection, allow affinity maturation for a particular antigen. The polypeptide is Immunoglobulin kappa variable 1-5 (Homo sapiens (Human)).